Reading from the N-terminus, the 255-residue chain is Sushi domain-containing protein 3 (255 aa).

The tract at residues 1 to 25 (MRWAAATLRGKARPRGRAGVTTPAP) is disordered. Residues 1-103 (MRWAAATLRG…VPPHETFGFK (103 aa)) are Extracellular-facing. N-linked (GlcNAc...) asparagine glycosylation occurs at Asn27. A Sushi domain is found at 30 to 93 (GTCAKLRLPP…WSSGSPVCKL (64 aa)). 2 disulfide bridges follow: Cys32-Cys75 and Cys61-Cys91. A helical membrane pass occupies residues 104 to 124 (VAVIASIVSCAIILLMSMAFL). Topologically, residues 125–255 (TCCLLKCVKK…PQQPAAYALG (131 aa)) are cytoplasmic. A disordered region spans residues 173 to 255 (SGPSQAHDNH…PQQPAAYALG (83 aa)). The segment covering 179 to 191 (HDNHSFTTDHGES) has biased composition (basic and acidic residues).

In terms of tissue distribution, highly expressed in estrogen receptor-positive breast tumors.

It is found in the cell membrane. May play a role in breast tumorigenesis by promoting estrogen-dependent cell proliferation, cell-cell interactions and migration. The polypeptide is Sushi domain-containing protein 3 (SUSD3) (Homo sapiens (Human)).